Consider the following 112-residue polypeptide: Putative pterin-4-alpha-carbinolamine dehydratase (112 aa).

This sequence belongs to the pterin-4-alpha-carbinolamine dehydratase family.

It carries out the reaction (4aS,6R)-4a-hydroxy-L-erythro-5,6,7,8-tetrahydrobiopterin = (6R)-L-erythro-6,7-dihydrobiopterin + H2O. In Vibrio campbellii (strain ATCC BAA-1116), this protein is Putative pterin-4-alpha-carbinolamine dehydratase.